Reading from the N-terminus, the 132-residue chain is Small ribosomal subunit protein uS8 (132 aa).

Belongs to the universal ribosomal protein uS8 family. In terms of assembly, part of the 30S ribosomal subunit. Contacts proteins S5 and S12.

Its function is as follows. One of the primary rRNA binding proteins, it binds directly to 16S rRNA central domain where it helps coordinate assembly of the platform of the 30S subunit. The chain is Small ribosomal subunit protein uS8 from Bacillus subtilis (strain 168).